The primary structure comprises 43 residues: Thymosin beta-b (43 aa).

Basic and acidic residues-rich tracts occupy residues 1–25 (MADK…ETQE) and 33–43 (ETIEQEKQCEA). The tract at residues 1-43 (MADKPDISEVSQFDKTKLKKTETQEKNTLPTKETIEQEKQCEA) is disordered.

The protein belongs to the thymosin beta family.

Its subcellular location is the cytoplasm. It localises to the cytoskeleton. In terms of biological role, plays an important role in the organization of the cytoskeleton. Binds to and sequesters actin monomers (G actin) and therefore inhibits actin polymerization. The protein is Thymosin beta-b of Cyprinus carpio (Common carp).